Consider the following 328-residue polypeptide: uncharacterized protein (328 aa).

Residues 3–126 (RVKIGEFKFG…EVIPQVLCTG (124 aa)) enclose the Bro-N domain.

This is an uncharacterized protein from Autographa californica nuclear polyhedrosis virus (AcMNPV).